A 186-amino-acid polypeptide reads, in one-letter code: Protein GrpE (186 aa).

It belongs to the GrpE family. Homodimer.

The protein resides in the cytoplasm. In terms of biological role, participates actively in the response to hyperosmotic and heat shock by preventing the aggregation of stress-denatured proteins, in association with DnaK and GrpE. It is the nucleotide exchange factor for DnaK and may function as a thermosensor. Unfolded proteins bind initially to DnaJ; upon interaction with the DnaJ-bound protein, DnaK hydrolyzes its bound ATP, resulting in the formation of a stable complex. GrpE releases ADP from DnaK; ATP binding to DnaK triggers the release of the substrate protein, thus completing the reaction cycle. Several rounds of ATP-dependent interactions between DnaJ, DnaK and GrpE are required for fully efficient folding. The chain is Protein GrpE from Novosphingobium aromaticivorans (strain ATCC 700278 / DSM 12444 / CCUG 56034 / CIP 105152 / NBRC 16084 / F199).